The chain runs to 81 residues: Sulfur carrier protein TusA (81 aa).

Cysteine 19 functions as the Cysteine persulfide intermediate in the catalytic mechanism.

The protein belongs to the sulfur carrier protein TusA family.

It localises to the cytoplasm. Functionally, sulfur carrier protein which probably makes part of a sulfur-relay system. This chain is Sulfur carrier protein TusA, found in Shewanella woodyi (strain ATCC 51908 / MS32).